Consider the following 175-residue polypeptide: uncharacterized protein (175 aa).

Residues 1-11 (METWRKGSFRN) constitute a mitochondrion transit peptide. Residues 29 to 48 (QGSILSQASTAGGDHEEYSN) are disordered.

It is found in the mitochondrion. This is an uncharacterized protein from Mus musculus (Mouse).